The primary structure comprises 195 residues: Ras-related protein Rab-31 (195 aa).

GTP contacts are provided by G16, G18, K19, S20, S21, D32, and H33. S20 provides a ligand contact to Mg(2+). 2 consecutive short sequence motifs (switch) follow at residues 30–42 and 63–79; these read HFDHNISPTIGAS and AGQERFHSLAPMYYRGS. The residue at position 36 (S36) is a Phosphoserine. T38, G64, N119, D122, A150, and K151 together coordinate GTP. T38 is a Mg(2+) binding site. The segment at 168–195 is disordered; sequence PPLGPQENGNSGGIKLGNQSLQASRRCC. Positions 184–195 are enriched in polar residues; the sequence is GNQSLQASRRCC. 2 S-geranylgeranyl cysteine lipidation sites follow: C194 and C195.

This sequence belongs to the small GTPase superfamily. Rab family. Interacts with OCRL. Interacts (in GDP-bound form) with RIN3 and GAPVD1, which function as guanine exchange factors (GEF). Interacts with EGFR. Interacts with NGFR. Interacts (in GTP-bound form) with EEA1. Interacts (in GTP-bound form) with APPL2; interaction contributes to or enhances recruitment of APPL2 to the phagosomes; interaction enhances Fc-gamma receptor-mediated phagocytosis through PI3K/Akt signaling in macrophages. It depends on Mg(2+) as a cofactor. In terms of tissue distribution, detected in brain astrocytes (at protein level).

The protein resides in the early endosome. Its subcellular location is the golgi apparatus. It localises to the trans-Golgi network. The protein localises to the trans-Golgi network membrane. It is found in the cytoplasmic vesicle. The protein resides in the phagosome. Its subcellular location is the phagosome membrane. The catalysed reaction is GTP + H2O = GDP + phosphate + H(+). Regulated by guanine nucleotide exchange factors (GEFs) including RIN3 and GAPVD1 which promote the exchange of bound GDP for free GTP. Regulated by GTPase activating proteins (GAPs) which increase the GTP hydrolysis activity. Inhibited by GDP dissociation inhibitors (GDIs) which prevent Rab-GDP dissociation. In terms of biological role, the small GTPases Rab are key regulators of intracellular membrane trafficking, from the formation of transport vesicles to their fusion with membranes. Rabs cycle between an inactive GDP-bound form and an active GTP-bound form that is able to recruit to membranes different set of downstream effectors directly responsible for vesicle formation, movement, tethering and fusion. Required for the integrity and for normal function of the Golgi apparatus and the trans-Golgi network. Plays a role in insulin-stimulated translocation of GLUT4 to the cell membrane. Plays a role in the maturation of phagosomes that engulf pathogens, such as S.aureus and Mycobacterium. Plays a role in M6PR transport from the trans-Golgi network to endosomes. Plays a role in the internalization of EGFR from the cell membrane into endosomes. The chain is Ras-related protein Rab-31 from Mus musculus (Mouse).